We begin with the raw amino-acid sequence, 336 residues long: PHD finger protein 11 (336 aa).

The interval 1 to 20 (MAEETAPPCGPVSTGGSLSP) is disordered. A C2HC pre-PHD-type zinc finger spans residues 25–61 (KRTCALCPDGHEWSVIYFAPSANIAAHENCLLYSSGL). The PHD-type zinc finger occupies 91-143 (LKCSLCNKGGATVGCDLSSCRKSYHYVCAKKDHAIPQVDEDLGTYKIFCPEHP). Disordered regions lie at residues 139–179 (CPEH…KKMK) and 303–336 (DPSG…GDSL). Residues 303–314 (DPSGSTSGSLLP) are compositionally biased toward low complexity.

As to quaternary structure, interacts with BRCA1 and RELA.

It localises to the nucleus. Positive regulator of Th1-type cytokine gene expression. The chain is PHD finger protein 11 (Phf11) from Rattus norvegicus (Rat).